The primary structure comprises 359 residues: Nicotinate-nucleotide--dimethylbenzimidazole phosphoribosyltransferase (359 aa).

The Proton acceptor role is filled by Glu318.

This sequence belongs to the CobT family. Homodimer.

It catalyses the reaction 5,6-dimethylbenzimidazole + nicotinate beta-D-ribonucleotide = alpha-ribazole 5'-phosphate + nicotinate + H(+). The protein operates within nucleoside biosynthesis; alpha-ribazole biosynthesis; alpha-ribazole from 5,6-dimethylbenzimidazole: step 1/2. Functionally, catalyzes the synthesis of alpha-ribazole-5'-phosphate from nicotinate mononucleotide (NAMN) and 5,6-dimethylbenzimidazole (DMB). In Escherichia coli (strain UTI89 / UPEC), this protein is Nicotinate-nucleotide--dimethylbenzimidazole phosphoribosyltransferase.